A 209-amino-acid chain; its full sequence is Ribosomal RNA large subunit methyltransferase E (209 aa).

Glycine 63, tryptophan 65, aspartate 83, aspartate 99, and aspartate 124 together coordinate S-adenosyl-L-methionine. Lysine 164 functions as the Proton acceptor in the catalytic mechanism. Residues 191–209 enclose the TRAM domain; sequence EASRGRSREVYIVAMGYMG.

This sequence belongs to the class I-like SAM-binding methyltransferase superfamily. RNA methyltransferase RlmE family.

The protein localises to the cytoplasm. The catalysed reaction is uridine(2552) in 23S rRNA + S-adenosyl-L-methionine = 2'-O-methyluridine(2552) in 23S rRNA + S-adenosyl-L-homocysteine + H(+). Its function is as follows. Specifically methylates the uridine in position 2552 of 23S rRNA at the 2'-O position of the ribose in the fully assembled 50S ribosomal subunit. In Histophilus somni (strain 129Pt) (Haemophilus somnus), this protein is Ribosomal RNA large subunit methyltransferase E.